Reading from the N-terminus, the 519-residue chain is UPF0053 protein bbp_300 (519 aa).

7 helical membrane-spanning segments follow: residues 13-35 (LLTL…AILS), 48-70 (LIGL…WMVT), 80-102 (YFSF…FKAT), 123-145 (AGFW…DAII), 150-172 (TINN…LIAS), 185-207 (VVVL…ALGF), and 212-231 (GYLY…NQIA). 2 CBS domains span residues 311–373 (MTPR…IIDF) and 374–434 (SSTT…DADE).

The protein belongs to the UPF0053 family.

It localises to the cell membrane. This Buchnera aphidicola subsp. Baizongia pistaciae (strain Bp) protein is UPF0053 protein bbp_300.